A 199-amino-acid polypeptide reads, in one-letter code: Pyridoxal 5'-phosphate synthase subunit PdxT (199 aa).

Gly-52 to Ser-54 provides a ligand contact to L-glutamine. Residue Cys-84 is the Nucleophile of the active site. Residues Arg-115 and Ile-143–Arg-144 contribute to the L-glutamine site. Active-site charge relay system residues include His-179 and Glu-181.

It belongs to the glutaminase PdxT/SNO family. In terms of assembly, in the presence of PdxS, forms a dodecamer of heterodimers. Only shows activity in the heterodimer.

It carries out the reaction aldehydo-D-ribose 5-phosphate + D-glyceraldehyde 3-phosphate + L-glutamine = pyridoxal 5'-phosphate + L-glutamate + phosphate + 3 H2O + H(+). The enzyme catalyses L-glutamine + H2O = L-glutamate + NH4(+). Its pathway is cofactor biosynthesis; pyridoxal 5'-phosphate biosynthesis. Its function is as follows. Catalyzes the hydrolysis of glutamine to glutamate and ammonia as part of the biosynthesis of pyridoxal 5'-phosphate. The resulting ammonia molecule is channeled to the active site of PdxS. The chain is Pyridoxal 5'-phosphate synthase subunit PdxT from Methanosarcina mazei (strain ATCC BAA-159 / DSM 3647 / Goe1 / Go1 / JCM 11833 / OCM 88) (Methanosarcina frisia).